A 116-amino-acid chain; its full sequence is Large ribosomal subunit protein uL24 (116 aa).

The protein belongs to the universal ribosomal protein uL24 family. Part of the 50S ribosomal subunit.

Its function is as follows. One of two assembly initiator proteins, it binds directly to the 5'-end of the 23S rRNA, where it nucleates assembly of the 50S subunit. Functionally, one of the proteins that surrounds the polypeptide exit tunnel on the outside of the subunit. This is Large ribosomal subunit protein uL24 from Protochlamydia amoebophila (strain UWE25).